Here is a 541-residue protein sequence, read N- to C-terminus: Formimidoyltransferase-cyclodeaminase (541 aa).

The interval 1–181 (MSQLVECVPN…GATVAGARKF (181 aa)) is formiminotransferase N-subdomain. Catalysis depends on His-82, which acts as the For formimidoyltransferase activity. 163 to 172 (GPSAFVPSWG) provides a ligand contact to folate. The segment at 182–326 (LLAFNINLLS…PKERIIEYLV (145 aa)) is formiminotransferase C-subdomain. The tract at residues 327–334 (PEAGPEQS) is linker. Residues 335–541 (LLHKPLRTFV…VLDRLEARQA (207 aa)) form a cyclodeaminase/cyclohydrolase region. The active-site For cyclodeaminase activity is the Asp-412. Ser-520 carries the post-translational modification Phosphoserine.

The protein in the C-terminal section; belongs to the cyclodeaminase/cyclohydrolase family. It in the N-terminal section; belongs to the formiminotransferase family. As to quaternary structure, homooctamer, including four polyglutamate binding sites. The subunits are arranged as a tetramer of dimers, and form a planar ring-shaped structure.

The protein resides in the cytoplasm. The protein localises to the cytosol. Its subcellular location is the golgi apparatus. It is found in the cytoskeleton. It localises to the microtubule organizing center. The protein resides in the centrosome. The protein localises to the centriole. The enzyme catalyses 5-formimidoyltetrahydrofolate + L-glutamate = N-formimidoyl-L-glutamate + (6S)-5,6,7,8-tetrahydrofolate. It carries out the reaction 5-formimidoyltetrahydrofolate + 2 H(+) = (6R)-5,10-methenyltetrahydrofolate + NH4(+). Its pathway is amino-acid degradation; L-histidine degradation into L-glutamate; L-glutamate from N-formimidoyl-L-glutamate (transferase route): step 1/1. Folate-dependent enzyme, that displays both transferase and deaminase activity. Serves to channel one-carbon units from formiminoglutamate to the folate pool. In terms of biological role, binds and promotes bundling of vimentin filaments originating from the Golgi. This Sus scrofa (Pig) protein is Formimidoyltransferase-cyclodeaminase (FTCD).